Here is a 132-residue protein sequence, read N- to C-terminus: Small ribosomal subunit protein uS11 (132 aa).

This sequence belongs to the universal ribosomal protein uS11 family. In terms of assembly, part of the 30S ribosomal subunit.

In terms of biological role, located on the platform of the 30S subunit. The protein is Small ribosomal subunit protein uS11 of Caldivirga maquilingensis (strain ATCC 700844 / DSM 13496 / JCM 10307 / IC-167).